A 124-amino-acid chain; its full sequence is Small ribosomal subunit protein uS11 (124 aa).

The protein belongs to the universal ribosomal protein uS11 family. In terms of assembly, part of the 30S ribosomal subunit. Interacts with proteins S7 and S18. Binds to IF-3.

In terms of biological role, located on the platform of the 30S subunit, it bridges several disparate RNA helices of the 16S rRNA. Forms part of the Shine-Dalgarno cleft in the 70S ribosome. The chain is Small ribosomal subunit protein uS11 from Sulfurovum sp. (strain NBC37-1).